Reading from the N-terminus, the 207-residue chain is High frequency lysogenization protein HflD homolog (207 aa).

This sequence belongs to the HflD family.

It localises to the cytoplasm. The protein resides in the cell inner membrane. The protein is High frequency lysogenization protein HflD homolog of Methylococcus capsulatus (strain ATCC 33009 / NCIMB 11132 / Bath).